The sequence spans 408 residues: Aminoacylase-1A (408 aa).

His-80 serves as a coordination point for Zn(2+). Residue Asp-82 is part of the active site. Asp-113 is a binding site for Zn(2+). Glu-147 acts as the Proton acceptor in catalysis. Glu-148, Glu-175, and His-373 together coordinate Zn(2+). Phosphoserine is present on Ser-408.

This sequence belongs to the peptidase M20A family. Homodimer. The cofactor is Zn(2+). The N-terminus is blocked.

It localises to the cytoplasm. It catalyses the reaction an N-acyl-L-amino acid + H2O = an L-alpha-amino acid + a carboxylate. The catalysed reaction is an N-acetyl-L-cysteine-S-conjugate + H2O = an S-substituted L-cysteine + acetate. Its function is as follows. Involved in the hydrolysis of N-acylated or N-acetylated amino acids (except L-aspartate). The chain is Aminoacylase-1A (Acy1a) from Rattus norvegicus (Rat).